Reading from the N-terminus, the 188-residue chain is Ribosome-recycling factor (188 aa).

It belongs to the RRF family.

The protein resides in the cytoplasm. Functionally, responsible for the release of ribosomes from messenger RNA at the termination of protein biosynthesis. May increase the efficiency of translation by recycling ribosomes from one round of translation to another. This Acidiphilium cryptum (strain JF-5) protein is Ribosome-recycling factor.